Consider the following 165-residue polypeptide: Small ribosomal subunit protein uS5 (165 aa).

The S5 DRBM domain occupies 13–76 (LEEKVLVVNR…EAAKKNLMKI (64 aa)).

Belongs to the universal ribosomal protein uS5 family. As to quaternary structure, part of the 30S ribosomal subunit. Contacts proteins S4 and S8.

Its function is as follows. With S4 and S12 plays an important role in translational accuracy. Located at the back of the 30S subunit body where it stabilizes the conformation of the head with respect to the body. The protein is Small ribosomal subunit protein uS5 of Chlamydia pneumoniae (Chlamydophila pneumoniae).